We begin with the raw amino-acid sequence, 168 residues long: G/U mismatch-specific DNA glycosylase (168 aa).

This sequence belongs to the uracil-DNA glycosylase (UDG) superfamily. TDG/mug family. Binds DNA as a monomer.

Its subcellular location is the cytoplasm. It carries out the reaction Specifically hydrolyzes mismatched double-stranded DNA and polynucleotides, releasing free uracil.. Functionally, excises ethenocytosine and uracil, which can arise by alkylation or deamination of cytosine, respectively, from the corresponding mispairs with guanine in ds-DNA. It is capable of hydrolyzing the carbon-nitrogen bond between the sugar-phosphate backbone of the DNA and the mispaired base. The complementary strand guanine functions in substrate recognition. Required for DNA damage lesion repair in stationary-phase cells. The polypeptide is G/U mismatch-specific DNA glycosylase (Shigella dysenteriae serotype 1 (strain Sd197)).